A 433-amino-acid chain; its full sequence is Keratin, type I cytoskeletal 47 kDa (433 aa).

Positions 1–73 (MSYSTRSISQ…AFNVSVTSNN (73 aa)) are head. Residues 74–109 (GKETMQNLNDRLANYLDRVRSLEQANHELELKIREY) form a coil 1A region. An IF rod domain is found at 74-385 (GKETMQNLND…RLLEGEDTRF (312 aa)). A linker 1 region spans residues 110 to 127 (LDKKAAVGSLDYSGYYNT). The segment at 128 to 219 (INLLRSQIND…KNHEEELAVV (92 aa)) is coil 1B. Residues 220-242 (RSSARGNVDVQVDSAPPVDLAQI) are linker 12. Residues 243 to 381 (MADVRSQYES…ATYRRLLEGE (139 aa)) form a coil 2 region. The segment at 382-433 (DTRFSQTETQKAVTIVSKEQSSSSIKKVKTVIEEVVDGKVVSSRVEELTETS) is tail.

It belongs to the intermediate filament family. Heterotetramer of two type I and two type II keratins.

The protein is Keratin, type I cytoskeletal 47 kDa (xk70a) of Xenopus laevis (African clawed frog).